We begin with the raw amino-acid sequence, 317 residues long: Transaldolase 1 (317 aa).

Catalysis depends on Lys-132, which acts as the Schiff-base intermediate with substrate.

It belongs to the transaldolase family. Type 1 subfamily. Homodimer.

The protein localises to the cytoplasm. The catalysed reaction is D-sedoheptulose 7-phosphate + D-glyceraldehyde 3-phosphate = D-erythrose 4-phosphate + beta-D-fructose 6-phosphate. It participates in carbohydrate degradation; pentose phosphate pathway; D-glyceraldehyde 3-phosphate and beta-D-fructose 6-phosphate from D-ribose 5-phosphate and D-xylulose 5-phosphate (non-oxidative stage): step 2/3. Transaldolase is important for the balance of metabolites in the pentose-phosphate pathway. The protein is Transaldolase 1 of Shigella sonnei (strain Ss046).